The following is a 915-amino-acid chain: DNA (cytosine-5)-methyltransferase 3 (915 aa).

Over residues 1-14 (MAPSSPSSARPTRA) the composition is skewed to low complexity. Disordered regions lie at residues 1 to 107 (MAPS…AEEQ) and 152 to 171 (HSNW…PEED). The span at 21 to 30 (AMAEEIHQNQ) shows a compositional bias: basic and acidic residues. Over residues 42–57 (AKRRRKAASSGKKPKP) the composition is skewed to basic residues. A compositionally biased stretch (basic and acidic residues) spans 71 to 80 (KKGETEKTEP). The span at 81–107 (VVDDVCAEEPDEEELAMGEEEAEAEEQ) shows a compositional bias: acidic residues. Residues 188–313 (IVYCLGDDVY…VAYSTFANIS (126 aa)) form the BAH domain. Polar residues predominate over residues 315-328 (ENGQSGSETASGIS). Residues 315–338 (ENGQSGSETASGISSDDAGLETSS) are disordered. In terms of domain architecture, SAM-dependent MTase C5-type spans 345 to 876 (ATLLDLYSGC…YCLGQAYLGE (532 aa)). The region spanning 445 to 508 (FVVQKLIGIR…EGRKRKILPL (64 aa)) is the Chromo domain. Residue Cys521 is part of the active site.

It belongs to the class I-like SAM-binding methyltransferase superfamily. C5-methyltransferase family.

It is found in the nucleus. The enzyme catalyses a 2'-deoxycytidine in DNA + S-adenosyl-L-methionine = a 5-methyl-2'-deoxycytidine in DNA + S-adenosyl-L-homocysteine + H(+). Functionally, may be involved in the CpXpG methylation and in gene silencing. The protein is DNA (cytosine-5)-methyltransferase 3 (DMT105) of Zea mays (Maize).